An 840-amino-acid polypeptide reads, in one-letter code: Protein translocase subunit SecA (840 aa).

ATP-binding positions include Q85, 103 to 107 (GEGKT), and D492. The tract at residues 787–822 (QRERVAKETGASHGGDSQEVKKKPVKKEPKVGRNDL) is disordered. Residues 802–819 (DSQEVKKKPVKKEPKVGR) are compositionally biased toward basic and acidic residues. Residues C823, C825, C834, and C835 each coordinate Zn(2+).

It belongs to the SecA family. Monomer and homodimer. Part of the essential Sec protein translocation apparatus which comprises SecA, SecYEG and auxiliary proteins SecDF. Other proteins may also be involved. Requires Zn(2+) as cofactor.

The protein localises to the cell membrane. Its subcellular location is the cytoplasm. It catalyses the reaction ATP + H2O + cellular proteinSide 1 = ADP + phosphate + cellular proteinSide 2.. In terms of biological role, part of the Sec protein translocase complex. Interacts with the SecYEG preprotein conducting channel. Has a central role in coupling the hydrolysis of ATP to the transfer of proteins into and across the cell membrane, serving as an ATP-driven molecular motor driving the stepwise translocation of polypeptide chains across the membrane. In Clostridium perfringens (strain ATCC 13124 / DSM 756 / JCM 1290 / NCIMB 6125 / NCTC 8237 / Type A), this protein is Protein translocase subunit SecA.